The chain runs to 732 residues: Acylamino-acid-releasing enzyme (732 aa).

An N-acetylmethionine modification is found at M1. Phosphoserine occurs at positions 185 and 187. Catalysis depends on charge relay system residues S587, D675, and H707.

As to quaternary structure, homotetramer. Expressed in erythrocytes (at protein level).

It is found in the cytoplasm. It catalyses the reaction Cleavage of an N-acetyl or N-formyl amino acid from the N-terminus of a polypeptide.. With respect to regulation, homotetramerization is required for activity. Tetramerization results in the formation of a gated channel which is involved in substrate selection and substrate access to the catalytic sites. Its function is as follows. This enzyme catalyzes the hydrolysis of the N-terminal peptide bond of an N-acetylated peptide to generate an N-acetylated amino acid and a peptide with a free N-terminus. It preferentially cleaves off Ac-Ala, Ac-Met and Ac-Ser. Also, involved in the degradation of oxidized and glycated proteins. This is Acylamino-acid-releasing enzyme (APEH) from Homo sapiens (Human).